The primary structure comprises 72 residues: uncharacterized protein (72 aa).

The segment covering 1–38 (MSIFSSLSSLSTGSLKSSVSSIENGSSSGSFGSNETSG) has biased composition (low complexity). Residues 1 to 42 (MSIFSSLSSLSTGSLKSSVSSIENGSSSGSFGSNETSGWGQH) are disordered.

This is an uncharacterized protein from Dictyostelium discoideum (Social amoeba).